The following is a 4660-amino-acid chain: Low-density lipoprotein receptor-related protein 2 (4660 aa).

A signal peptide spans 1 to 25 (MERGAAAAAWMLLLAIAACLAPVSG). Topologically, residues 26–4425 (QECGSGNFRC…LSRGIPPGTT (4400 aa)) are extracellular. LDL-receptor class A domains lie at 27–63 (ECGS…IGCP), 66–104 (SCGS…QNCP), 107–143 (TCSS…RNCY), 146–180 (TCDQ…ANCT), 182–218 (LCSQ…HNCN), 221–257 (TCGG…DGCE), and 264–307 (TCYP…RYCG). Disulfide bonds link C28–C40, C35–C53, C47–C62, C67–C80, C74–C93, C87–C103, C108–C120, C115–C133, C127–C142, C147–C157, C152–C170, C164–C179, C183–C195, C190–C208, C202–C217, C222–C234, C229–C247, C241–C256, C265–C278, C272–C291, and C285–C306. 2 N-linked (GlcNAc...) asparagine glycosylation sites follow: N159 and N178. N-linked (GlcNAc...) asparagine glycosylation is found at N299, N340, N387, and N462. LDL-receptor class B repeat units follow at residues 435-477 (HRVF…DWIN), 478-520 (NKLY…DPTV), 521-567 (GYLF…DLVS), and 568-612 (KRVY…FEEH). Residue N657 is glycosylated (N-linked (GlcNAc...) asparagine). LDL-receptor class B repeat units follow at residues 752–794 (STIF…DWIS), 795–836 (RNLY…HPAA), 837–880 (GYMF…DWST), and 881–924 (SRLY…FKDN). The N-linked (GlcNAc...) asparagine glycan is linked to N865. In terms of domain architecture, LDL-receptor class A 8 spans 1024-1060 (QCGSSSFPCNNGKCVPSIFRCDGVDDCHDNSDEHQCG). 3 disulfides stabilise this stretch: C1025–C1037, C1032–C1050, and C1044–C1059. N1063 carries an N-linked (GlcNAc...) asparagine glycan. LDL-receptor class A domains are found at residues 1065-1102 (TCSS…QNCP), 1109-1145 (TCPP…KNCQ), 1149-1185 (TCHP…AGCV), 1187-1224 (NCTS…AGCP), 1230-1268 (MCHP…NGCV), 1271-1307 (TCSP…KDCP), and 1312-1350 (HCPS…PLCN). 9 cysteine pairs are disulfide-bonded: C1066-C1079, C1073-C1092, C1086-C1101, C1110-C1122, C1117-C1135, C1129-C1144, C1150-C1162, C1157-C1175, and C1169-C1184. 6 residues coordinate Ca(2+): W1127, D1130, D1132, D1134, D1140, and E1141. A glycan (N-linked (GlcNAc...) asparagine) is linked at N1187. Disulfide bonds link C1188-C1201, C1195-C1214, C1208-C1223, C1231-C1244, C1238-C1257, C1251-C1267, C1272-C1284, C1279-C1297, C1291-C1306, C1313-C1326, C1320-C1339, C1333-C1349, C1354-C1365, C1361-C1374, C1376-C1389, C1395-C1405, C1401-C1414, and C1416-C1429. The Ca(2+) site is built by Y1206, D1209, V1211, D1213, D1219, and E1220. Residues N1328 and N1341 are each glycosylated (N-linked (GlcNAc...) asparagine). The EGF-like 1 domain occupies 1350-1390 (NQDSCLHFNGGCTHRCIQGPFGATCVCPIGYQLANDTKTCE). N1384 carries N-linked (GlcNAc...) asparagine glycosylation. Residues 1391–1430 (DVNECDIPGFCSQHCVNMRGSFRCACDPEYTLESDGRTCK) form the EGF-like 2; calcium-binding domain. N-linked (GlcNAc...) asparagine glycosylation is found at N1451, N1497, and N1551. 5 LDL-receptor class B repeats span residues 1479-1521 (GRVF…DWIG), 1522-1564 (RNIY…DPRM), 1567-1610 (NVMF…DYPN), 1611-1655 (RLIY…FEDS), and 1656-1696 (VFWT…IHPS). Residues N1676, N1733, and N1811 are each glycosylated (N-linked (GlcNAc...) asparagine). LDL-receptor class B repeat units follow at residues 1791-1833 (QFIY…DWVS), 1834-1883 (RNIY…DPAR), 1884-1931 (GKLY…DIQE), 1932-1973 (QKLY…HGSF), 1974-2014 (LYYS…YHHR), 2108-2157 (GFIY…DWVA), 2158-2202 (GNLY…DPKH), 2203-2246 (RYLF…DHDT), 2247-2290 (GYIY…FGES), and 2291-2333 (IIWV…FDEH). Residues N2131, N2134, N2178, and N2225 are each glycosylated (N-linked (GlcNAc...) asparagine). Residue N2396 is glycosylated (N-linked (GlcNAc...) asparagine). LDL-receptor class B repeat units follow at residues 2432-2478 (NRIF…DWIN), 2479-2519 (RRIY…DPCR), 2520-2563 (GYMY…DLET), 2564-2605 (DLLY…YGQY), and 2606-2647 (IYWT…VVKT). 2 N-linked (GlcNAc...) asparagine glycosylation sites follow: N2488 and N2548. LDL-receptor class A domains lie at 2700-2738 (RCNQ…TVCA), 2741-2777 (TCRS…AGCL), 2780-2819 (SCNS…KNCP), 2822-2861 (TCQP…IYCA), 2864-2902 (TCRS…DTCG), 2907-2946 (SCSA…HHCE), 2949-2991 (NCSS…QNCT), 2994-3030 (ACST…RGCS), 3033-3071 (PCRD…HLCH), and 3076-3112 (TCPP…KGCG). Cystine bridges form between C2701–C2713, C2708–C2726, C2720–C2737, C2742–C2754, C2749–C2767, C2761–C2776, C2781–C2794, C2789–C2807, C2801–C2818, C2823–C2836, C2830–C2849, C2843–C2860, C2865–C2878, C2872–C2891, C2885–C2901, C2908–C2920, C2915–C2933, and C2927–C2945. An N-linked (GlcNAc...) asparagine glycan is attached at N2782. An N-linked (GlcNAc...) asparagine glycan is attached at N2810. N2949 carries N-linked (GlcNAc...) asparagine glycosylation. Cystine bridges form between C2950-C2967, C2957-C2980, C2974-C2990, C2995-C3007, C3002-C3020, C3014-C3029, C3034-C3046, C3041-C3059, C3053-C3070, C3077-C3089, C3084-C3102, C3096-C3111, C3116-C3128, C3124-C3137, C3139-C3152, C3158-C3169, C3165-C3178, and C3180-C3193. The N-linked (GlcNAc...) asparagine glycan is linked to N2989. The EGF-like 3 domain maps to 3112–3153 (GINECQDSSISHCDHNCTDTITSFYCSCLPGYKLMSDKRTCV). N-linked (GlcNAc...) asparagine glycosylation occurs at N3127. One can recognise an EGF-like 4; calcium-binding domain in the interval 3154 to 3194 (DIDECKETPQLCSQKCENVIGSYICKCAPGYIREPDGKSCR). Residues N3213, N3259, N3317, and N3357 are each glycosylated (N-linked (GlcNAc...) asparagine). 5 LDL-receptor class B repeats span residues 3241-3283 (ERLY…DWVS), 3284-3326 (RKLY…ENPR), 3335-3378 (GYVY…DYTN), 3379-3421 (DLLY…FEDT), and 3422-3462 (VFWT…LHPY). An N-linked (GlcNAc...) asparagine glycan is attached at N3448. LDL-receptor class A domains are found at residues 3513–3551 (MCSS…DLCP), 3554–3592 (FCRL…VLCE), 3595–3633 (RCEA…SHCA), 3636–3674 (TCRP…HECM), 3679–3717 (NCDN…QGCE), 3720–3757 (PCHP…ESCV), 3760–3796 (ECTE…RDCE), and 3799–3835 (TCHP…SACP). 24 cysteine pairs are disulfide-bonded: C3514–C3527, C3521–C3540, C3534–C3550, C3555–C3567, C3562–C3580, C3574–C3591, C3596–C3608, C3603–C3621, C3615–C3632, C3637–C3649, C3644–C3662, C3656–C3673, C3680–C3694, C3688–C3707, C3701–C3716, C3721–C3734, C3729–C3747, C3741–C3756, C3761–C3773, C3768–C3786, C3780–C3795, C3800–C3812, C3807–C3825, and C3819–C3834. An N-linked (GlcNAc...) asparagine glycan is attached at N3566. An N-linked (GlcNAc...) asparagine glycan is attached at N3682. N-linked (GlcNAc...) asparagine glycosylation is present at N3840. LDL-receptor class A domains are found at residues 3843 to 3881 (YCPA…HLCF), 3884 to 3923 (PCES…EHCR), and 3929 to 3965 (PCTD…TGCN). 9 disulfide bridges follow: C3844/C3856, C3851/C3869, C3863/C3880, C3885/C3898, C3893/C3911, C3905/C3922, C3930/C3942, C3937/C3955, and C3949/C3964. N-linked (GlcNAc...) asparagine glycans are attached at residues N3969 and N3980. The EGF-like 5; calcium-binding domain occupies 4009–4050 (DINECEEFGICPQSCRNSKGSYECFCVDGFKSMSTHYGERCA). Intrachain disulfides connect C4013–C4023, C4019–C4032, and C4034–C4049. Residue N4070 is glycosylated (N-linked (GlcNAc...) asparagine). 3 LDL-receptor class B repeats span residues 4156-4198 (RHIY…NPKL), 4199-4242 (GLMF…DYLN), and 4244-4285 (DRIY…FEDQ). N-linked (GlcNAc...) asparagine glycosylation is present at N4329. In terms of domain architecture, EGF-like 6 spans 4379 to 4413 (MPSPCRCMHGGSCYFDENDLPKCKCSSGYSGEYCE). 3 cysteine pairs are disulfide-bonded: C4383–C4391, C4385–C4401, and C4403–C4412. Residues 4426-4446 (MALLLTFAMVIIVGALVLVGF) form a helical membrane-spanning segment. Residues 4447–4660 (FHYRKTGSLL…ANLVKEDSDV (214 aa)) are Cytoplasmic-facing. Positions 4454–4463 (SLLPSLPKLP) match the SH3-binding motif. The PxLPxI/L motif 1; mediates interaction with ANKRA2 signature appears at 4457 to 4462 (PSLPKL). The short motif at 4460–4465 (PKLPSL) is the PxLPxI/L motif 2; mediates interaction with ANKRA2 element. Phosphoserine is present on residues S4464 and S4467. An Endocytosis signal motif is present at residues 4522–4527 (FENPMY). The disordered stretch occupies residues 4558–4660 (QNYGRSIDPS…ANLVKEDSDV (103 aa)). At S4577 the chain carries Phosphoserine. Positions 4597-4610 (QTTNFENPIYAEMD) are interaction with DAB2. The NPXY motif signature appears at 4603-4606 (NPIY). The SH2-binding motif lies at 4606 to 4609 (YAEM). The SH3-binding signature appears at 4619 to 4630 (VAPPPSPSLPAK). Residue S4624 is modified to Phosphoserine. Positions 4627-4636 (LPAKASKRSS) are enriched in low complexity. At T4637 the chain carries Phosphothreonine. Residue S4658 is modified to Phosphoserine.

This sequence belongs to the LDLR family. In terms of assembly, binds plasminogen, extracellular matrix components, plasminogen activator-plasminogen activator inhibitor type I complex, apolipoprotein E-enriched beta-VLDL, lipoprotein lipase, lactoferrin, CLU/clusterin and calcium. Forms a multimeric complex together with LRPAP1. Interacts (via PxLPxI/L motif) with ANKRA2 (via ankyrin repeats). Interacts with LRP2BP. Interacts (via NPXY motif) with DAB2; the interaction is not affected by tyrosine phosphorylation of the NPXY motif. Interacts with MB. Interacts with BMP4. Interacts with the Sonic hedgehog protein N-product which is the active product of SHH. Interacts with CST3 in a calcium-dependent manner. Interacts with the vitamin-D binding protein GC/DBP. Interacts with sex hormone-binding protein SHBG. Interacts with angiotensin-2. Also interacts with angiotensin 1-7. Interacts with APOM. Interacts with selenoprotein SEPP1. Interacts with LEP. Interacts with ALB. Interacts with the antiapoptotic protein BIRC5/survivin. Interacts with matrix metalloproteinase MMP2 in complex with metalloproteinase inhibitor TIMP1. In neurons, forms a trimeric complex with APP and APPB1/FE65. Interacts with LDLRAP1/ARH; mediates trafficking of LRP2 to the endocytic recycling compartment. Does not interact with beta-amyloid protein 40 alone but interacts with the complex composed of beta-amyloid protein 40 and CLU/APOJ. Interacts with MDK. Post-translationally, a fraction undergoes proteolytic cleavage of the extracellular domain at the cell membrane to generate a cytoplasmic tail fragment. This is internalized into the early endosome from where it trafficks in an LDLRAP1/ARH-dependent manner to the endocytic recycling compartment (ERC). In the ERC, it is further cleaved by gamma-secretase to release a fragment which translocates to the nucleus and mediates transcriptional repression. N-glycosylation is required for ligand binding. Contains core-fucosylated N-glycans in kidney proximal convoluted tubules (PCTs) and hybrid-type N-glycans in proximal straight tubules (PSTs). Interacts with ligands in a glycoform-dependent manner. Retinol-binding protein and the vitamin D carrier GC/DBP are endocytosed primarily by PCTs, albumin is endocytosed equally by PCTs and PSTs, and the aminoglycoside kanamycin is endocytosed primarily by PSTs. In the inner ear, strongly expressed in the marginal cells of the stria vascularis (at protein level). In the female reproductive tract, expressed on the luminal side of the uterine epithelium (at protein level). In the adult brain, expressed in ependymal cells of the lateral ventricles where expression is restricted to the ependyma that faces the stem cell niche (at protein level). Expressed in neurons throughout the brain including in the hippocampus, limbic cortices and cerebellum (at protein level). In the developing optic nerve, expressed exclusively in astrocytes at 14.5 dpc, 16.5 dpc and 18.5 dpc (at protein level).

It is found in the apical cell membrane. It localises to the endosome lumen. The protein resides in the membrane. Its subcellular location is the coated pit. The protein localises to the cell projection. It is found in the dendrite. It localises to the axon. In terms of biological role, multiligand endocytic receptor. Acts together with CUBN to mediate endocytosis of high-density lipoproteins. Mediates receptor-mediated uptake of polybasic drugs such as aprotinin, aminoglycosides and polymyxin B. In the kidney, mediates the tubular uptake and clearance of leptin. Also mediates transport of leptin across the blood-brain barrier through endocytosis at the choroid plexus epithelium. Endocytosis of leptin in neuronal cells is required for hypothalamic leptin signaling and leptin-mediated regulation of feeding and body weight. Mediates endocytosis and subsequent lysosomal degradation of CST3 in kidney proximal tubule cells. Mediates renal uptake of 25-hydroxyvitamin D3 in complex with the vitamin D3 transporter GC/DBP. Mediates renal uptake of metallothionein-bound heavy metals. Together with CUBN, mediates renal reabsorption of myoglobin. Mediates renal uptake and subsequent lysosomal degradation of APOM. Plays a role in kidney selenium homeostasis by mediating renal endocytosis of selenoprotein SEPP1. Mediates renal uptake of the antiapoptotic protein BIRC5/survivin which may be important for functional integrity of the kidney. Mediates renal uptake of matrix metalloproteinase MMP2 in complex with metalloproteinase inhibitor TIMP1. Mediates endocytosis of Sonic hedgehog protein N-product (ShhN), the active product of SHH. Also mediates ShhN transcytosis. In the embryonic neuroepithelium, mediates endocytic uptake and degradation of BMP4, is required for correct SHH localization in the ventral neural tube and plays a role in patterning of the ventral telencephalon. Required at the onset of neurulation to sequester SHH on the apical surface of neuroepithelial cells of the rostral diencephalon ventral midline and to control PTCH1-dependent uptake and intracellular trafficking of SHH. During neurulation, required in neuroepithelial cells for uptake of folate bound to the folate receptor FOLR1 which is necessary for neural tube closure. In the adult brain, negatively regulates BMP signaling in the subependymal zone which enables neurogenesis to proceed. In astrocytes, mediates endocytosis of ALB which is required for the synthesis of the neurotrophic factor oleic acid. Involved in neurite branching. During optic nerve development, required for SHH-mediated migration and proliferation of oligodendrocyte precursor cells. Mediates endocytic uptake and clearance of SHH in the retinal margin which protects retinal progenitor cells from mitogenic stimuli and keeps them quiescent. Plays a role in reproductive organ development by mediating uptake in reproductive tissues of androgen and estrogen bound to the sex hormone binding protein SHBG. Mediates endocytosis of angiotensin-2. Also mediates endocytosis of angiotensin 1-7. Binds to the complex composed of beta-amyloid protein 40 and CLU/APOJ and mediates its endocytosis and lysosomal degradation. Required for embryonic heart development. Required for normal hearing, possibly through interaction with estrogen in the inner ear. The polypeptide is Low-density lipoprotein receptor-related protein 2 (Lrp2) (Mus musculus (Mouse)).